Here is a 345-residue protein sequence, read N- to C-terminus: Fructose-1,6-bisphosphatase class 1 (345 aa).

Residues Glu90, Asp109, Leu111, and Asp112 each coordinate Mg(2+). Residues 112-115 and Asn199 each bind substrate; that span reads DGSS. Glu271 is a Mg(2+) binding site.

This sequence belongs to the FBPase class 1 family. In terms of assembly, homotetramer. Mg(2+) serves as cofactor.

The protein resides in the cytoplasm. The catalysed reaction is beta-D-fructose 1,6-bisphosphate + H2O = beta-D-fructose 6-phosphate + phosphate. Its pathway is carbohydrate biosynthesis; Calvin cycle. This Rhodopseudomonas palustris (strain BisB5) protein is Fructose-1,6-bisphosphatase class 1.